The following is a 166-amino-acid chain: Cofilin-2 (166 aa).

Position 2 is an N-acetylalanine (Ala-2). A Phosphoserine modification is found at Ser-3. An ADF-H domain is found at 4 to 153 (GVTVNDEVIK…KDRSTLGEKL (150 aa)). The residue at position 6 (Thr-6) is a Phosphothreonine. Residues 30–34 (KKRKK) carry the Nuclear localization signal motif.

This sequence belongs to the actin-binding proteins ADF family. As to quaternary structure, interacts with CSRP3; possibly two molecules of CFL2 can interact with one molecule if CSRP3. The phosphorylation of Ser-24 may prevent recognition of the nuclear localization signal. In terms of tissue distribution, predominantly expressed in skeletal muscle.

It localises to the nucleus matrix. The protein localises to the cytoplasm. The protein resides in the cytoskeleton. Controls reversibly actin polymerization and depolymerization in a pH-sensitive manner. It has the ability to bind G- and F-actin in a 1:1 ratio of cofilin to actin. It is the major component of intranuclear and cytoplasmic actin rods. Required for muscle maintenance. May play a role during the exchange of alpha-actin forms during the early postnatal remodeling of the sarcomere. The sequence is that of Cofilin-2 (Cfl2) from Mus musculus (Mouse).